Here is a 274-residue protein sequence, read N- to C-terminus: Glutamate--cysteine ligase regulatory subunit (274 aa).

Position 59 is a phosphoserine (S59). The residue at position 263 (K263) is an N6-acetyllysine.

It belongs to the aldo/keto reductase family. Glutamate--cysteine ligase light chain subfamily. In terms of assembly, heterodimer of a catalytic heavy chain and a regulatory light chain.

It participates in sulfur metabolism; glutathione biosynthesis; glutathione from L-cysteine and L-glutamate: step 1/2. The protein is Glutamate--cysteine ligase regulatory subunit (GCLM) of Bos taurus (Bovine).